The chain runs to 212 residues: Uracil phosphoribosyltransferase (212 aa).

5-phospho-alpha-D-ribose 1-diphosphate contacts are provided by residues Arg-78, Arg-103, and 130 to 138; that span reads DPMLATGGS. Uracil-binding positions include Ile-193 and 198–200; that span reads GDA. Asp-199 is a 5-phospho-alpha-D-ribose 1-diphosphate binding site.

It belongs to the UPRTase family. Requires Mg(2+) as cofactor.

The catalysed reaction is UMP + diphosphate = 5-phospho-alpha-D-ribose 1-diphosphate + uracil. Its pathway is pyrimidine metabolism; UMP biosynthesis via salvage pathway; UMP from uracil: step 1/1. With respect to regulation, allosterically activated by GTP. Its function is as follows. Catalyzes the conversion of uracil and 5-phospho-alpha-D-ribose 1-diphosphate (PRPP) to UMP and diphosphate. This is Uracil phosphoribosyltransferase from Ectopseudomonas mendocina (strain ymp) (Pseudomonas mendocina).